The following is a 550-amino-acid chain: Copine-F (550 aa).

2 consecutive C2 domains span residues 1–115 (MAET…RLIG) and 123–246 (ITGK…PIIN). In terms of domain architecture, VWFA spans 296–521 (DLMVAIDCTE…DFQNEILRKL (226 aa)).

The protein belongs to the copine family.

The chain is Copine-F (cpnF) from Dictyostelium discoideum (Social amoeba).